An 89-amino-acid chain; its full sequence is UPF0237 protein LMOf2365_0562 (89 aa).

An ACT domain is found at 4–78 (VLTVIGKDNV…EDLQVKIHIQ (75 aa)).

The protein belongs to the UPF0237 family.

The polypeptide is UPF0237 protein LMOf2365_0562 (Listeria monocytogenes serotype 4b (strain F2365)).